The primary structure comprises 236 residues: MADS-box transcription factor 3 (236 aa).

The region spanning 1 to 61 (MGRGKIEIKR…GRLYEYANNS (61 aa)) is the MADS-box domain. Residues 87 to 178 (AQHYQQESSK…RSKVVENERG (92 aa)) enclose the K-box domain.

In terms of tissue distribution, expressed in lemmas, paleas and lodicules.

It is found in the nucleus. Functionally, probable transcription factor involved in the development of floral organs. Acts as C-class protein in association with MADS58. Involved in the control of lodicule number (whorl 2), stamen specification (whorl 3) and floral meristem determinacy (whorl 4), but not in the regulation of carpel morphogenesis. Plays a more predominant role in controlling lodicule development and in specifying stamen identity than MADS58. The sequence is that of MADS-box transcription factor 3 (MADS3) from Oryza sativa subsp. japonica (Rice).